We begin with the raw amino-acid sequence, 451 residues long: Ribonuclease J (451 aa).

6 residues coordinate Zn(2+): histidine 84, histidine 86, aspartate 88, histidine 89, histidine 155, and aspartate 177. 384 to 388 lines the substrate pocket; that stretch reads HVSGH. Zn(2+) is bound at residue histidine 410.

Belongs to the metallo-beta-lactamase superfamily. RNA-metabolizing metallo-beta-lactamase-like family. Archaeal RNase J subfamily. Homodimer. Zn(2+) serves as cofactor.

The protein localises to the cytoplasm. Its activity is regulated as follows. Inhibited by 1,10-phenanthroline. In terms of biological role, a highly processive 5'-3' exoribonuclease; no evidence has been seen for endonuclease activity. Prefers 5'-phosphate or 5'-hydroxyl ends; 5'-triphosphate substrates are very poorly degraded, does not degrade circular RNA. Does not degrade pre-tRNA(Trp) suggesting it is inhibited by strong secondary structures. Also degrades ssNDA but not dsDNA. The polypeptide is Ribonuclease J (Pyrococcus abyssi (strain GE5 / Orsay)).